The following is a 143-amino-acid chain: Large ribosomal subunit protein uL15 (143 aa).

Residues 1–47 are disordered; it reads MKLHELTPSEGSRFSRRRIGRGDSSGQGKTSGRGQKGQKARGKVRVG. The span at 23–35 shows a compositional bias: gly residues; it reads DSSGQGKTSGRGQ.

The protein belongs to the universal ribosomal protein uL15 family. As to quaternary structure, part of the 50S ribosomal subunit.

Binds to the 23S rRNA. The polypeptide is Large ribosomal subunit protein uL15 (Lactiplantibacillus plantarum (strain ATCC BAA-793 / NCIMB 8826 / WCFS1) (Lactobacillus plantarum)).